We begin with the raw amino-acid sequence, 346 residues long: Elongation factor Ts (346 aa).

Residues 80–83 (TDFV) are involved in Mg(2+) ion dislocation from EF-Tu.

The protein belongs to the EF-Ts family.

The protein localises to the cytoplasm. Functionally, associates with the EF-Tu.GDP complex and induces the exchange of GDP to GTP. It remains bound to the aminoacyl-tRNA.EF-Tu.GTP complex up to the GTP hydrolysis stage on the ribosome. This is Elongation factor Ts from Streptococcus pyogenes serotype M18 (strain MGAS8232).